The chain runs to 136 residues: Histone H3-7 (136 aa).

The disordered stretch occupies residues 1–43 (MARTKQTARKSTGGKAPRKQLATKAARKSAPATGGVKKPHRYR). An Asymmetric dimethylarginine modification is found at Arg3. Arg3 bears the Citrulline; alternate mark. Thr4 is subject to Phosphothreonine. Lys5 is modified (allysine; alternate). At Lys5 the chain carries N6,N6,N6-trimethyllysine; alternate. Lys5 carries the N6,N6-dimethyllysine; alternate modification. Lys5 is subject to N6-(2-hydroxyisobutyryl)lysine; alternate. N6-(beta-hydroxybutyryl)lysine; alternate is present on Lys5. Lys5 is modified (N6-acetyllysine; alternate). N6-methyllysine; alternate is present on Lys5. Position 6 is a 5-glutamyl dopamine; alternate (Gln6). Gln6 carries the 5-glutamyl serotonin; alternate modification. Thr7 is subject to Phosphothreonine. Arg9 carries the citrulline; alternate modification. Arg9 is modified (symmetric dimethylarginine). Lys10 is modified (N6,N6,N6-trimethyllysine; alternate). Lys10 carries the N6,N6-dimethyllysine; alternate modification. At Lys10 the chain carries N6-(2-hydroxyisobutyryl)lysine; alternate. Lys10 carries the N6-(beta-hydroxybutyryl)lysine; alternate modification. Lys10 is modified (N6-acetyllysine; alternate). Position 10 is an N6-methyllysine; alternate (Lys10). Position 10 is an N6-lactoyllysine; alternate (Lys10). ADP-ribosylserine; alternate is present on Ser11. A Phosphoserine; alternate modification is found at Ser11. The residue at position 12 (Thr12) is a Phosphothreonine. The residue at position 15 (Lys15) is an N6-(2-hydroxyisobutyryl)lysine; alternate. The residue at position 15 (Lys15) is an N6-(beta-hydroxybutyryl)lysine; alternate. The residue at position 15 (Lys15) is an N6-acetyllysine; alternate. The residue at position 15 (Lys15) is an N6-lactoyllysine; alternate. An N6-glutaryllysine; alternate modification is found at Lys15. An N6-succinyllysine; alternate modification is found at Lys15. Arg18 is modified (asymmetric dimethylarginine). A Citrulline; alternate modification is found at Arg18. An N6-(2-hydroxyisobutyryl)lysine; alternate mark is found at Lys19 and Lys24. 2 positions are modified to N6-(beta-hydroxybutyryl)lysine; alternate: Lys19 and Lys24. N6-acetyllysine; alternate is present on residues Lys19 and Lys24. An N6-methyllysine; alternate mark is found at Lys19 and Lys24. Residues Lys19 and Lys24 each carry the N6-lactoyllysine; alternate modification. An N6-glutaryllysine; alternate mark is found at Lys19 and Lys24. 2 positions are modified to N6-butyryllysine; alternate: Lys19 and Lys24. At Arg27 the chain carries Citrulline. Lys28 carries the post-translational modification N6,N6,N6-trimethyllysine; alternate. At Lys28 the chain carries N6,N6-dimethyllysine; alternate. An N6-(2-hydroxyisobutyryl)lysine; alternate modification is found at Lys28. Lys28 is modified (N6-acetyllysine; alternate). Position 28 is an N6-methyllysine; alternate (Lys28). N6-lactoyllysine; alternate is present on Lys28. Lys28 carries the post-translational modification N6-glutaryllysine; alternate. ADP-ribosylserine; alternate is present on Ser29. The residue at position 29 (Ser29) is a Phosphoserine; alternate. N6,N6,N6-trimethyllysine; alternate is present on Lys37. An N6,N6-dimethyllysine; alternate modification is found at Lys37. Lys37 carries the post-translational modification N6-(2-hydroxyisobutyryl)lysine; alternate. Lys37 carries the N6-acetyllysine; alternate modification. The residue at position 37 (Lys37) is an N6-methyllysine; alternate. Lys38 carries the N6-methyllysine modification. Residue Tyr42 is modified to Phosphotyrosine. The residue at position 57 (Lys57) is an N6,N6,N6-trimethyllysine; alternate. Lys57 is modified (N6-(2-hydroxyisobutyryl)lysine; alternate). An N6-(beta-hydroxybutyryl)lysine; alternate modification is found at Lys57. Lys57 bears the N6-acetyllysine; alternate mark. The residue at position 57 (Lys57) is an N6-lactoyllysine; alternate. Lys57 is subject to N6-glutaryllysine; alternate. Residue Lys57 is modified to N6-succinyllysine; alternate. N6-methyllysine is present on Lys57. Ser58 is subject to Phosphoserine. N6-(2-hydroxyisobutyryl)lysine; alternate occurs at positions 65 and 80. An N6-methyllysine; alternate mark is found at Lys65 and Lys80. The residue at position 80 (Lys80) is an N6,N6,N6-trimethyllysine; alternate. Lys80 carries the N6,N6-dimethyllysine; alternate modification. Residue Lys80 is modified to N6-acetyllysine; alternate. Residue Lys80 is modified to N6-lactoyllysine; alternate. Lys80 carries the N6-glutaryllysine; alternate modification. Lys80 bears the N6-succinyllysine; alternate mark. Thr81 bears the Phosphothreonine mark. A Phosphoserine modification is found at Ser87. A Phosphothreonine modification is found at Thr108. N6-acetyllysine; alternate occurs at positions 116 and 123. Residues Lys116 and Lys123 each carry the N6-glutaryllysine; alternate modification. At Lys123 the chain carries N6-(2-hydroxyisobutyryl)lysine; alternate. Lys123 carries the post-translational modification N6-methyllysine; alternate. Lys123 is modified (N6-succinyllysine; alternate).

This sequence belongs to the histone H3 family. The nucleosome is a histone octamer containing two molecules each of H2A, H2B, H3 and H4 assembled in one H3-H4 heterotetramer and two H2A-H2B heterodimers. The octamer wraps approximately 147 bp of DNA. During nucleosome assembly the chaperone ASF1A interacts with the histone H3-H4 heterodimer. In terms of processing, acetylation is generally linked to gene activation. Acetylation on Lys-10 (H3K9ac) impairs methylation at Arg-9 (H3R8me2s). Acetylation on Lys-19 (H3K18ac) and Lys-24 (H3K24ac) favors methylation at Arg-18 (H3R17me). Acetylation at Lys-123 (H3K122ac) by EP300/p300 plays a central role in chromatin structure: localizes at the surface of the histone octamer and stimulates transcription, possibly by promoting nucleosome instability. Citrullination at Arg-9 (H3R8ci) and/or Arg-18 (H3R17ci) by PADI4 impairs methylation and represses transcription. Post-translationally, asymmetric dimethylation at Arg-18 (H3R17me2a) by CARM1 is linked to gene activation. Symmetric dimethylation at Arg-9 (H3R8me2s) by PRMT5 is linked to gene repression. Asymmetric dimethylation at Arg-3 (H3R2me2a) by PRMT6 is linked to gene repression and is mutually exclusive with H3 Lys-5 methylation (H3K4me2 and H3K4me3). H3R2me2a is present at the 3' of genes regardless of their transcription state and is enriched on inactive promoters, while it is absent on active promoters. In terms of processing, methylation at Lys-5 (H3K4me), Lys-37 (H3K36me) and Lys-80 (H3K79me) are linked to gene activation. Methylation at Lys-5 (H3K4me) facilitates subsequent acetylation of H3 and H4. Methylation at Lys-80 (H3K79me) is associated with DNA double-strand break (DSB) responses and is a specific target for TP53BP1. Methylation at Lys-10 (H3K9me) and Lys-28 (H3K27me) are linked to gene repression. Methylation at Lys-10 (H3K9me) is a specific target for HP1 proteins (CBX1, CBX3 and CBX5) and prevents subsequent phosphorylation at Ser-11 (H3S10ph) and acetylation of H3 and H4. Methylation at Lys-5 (H3K4me) and Lys-80 (H3K79me) require preliminary monoubiquitination of H2B at 'Lys-120'. Methylation at Lys-10 (H3K9me) and Lys-28 (H3K27me) are enriched in inactive X chromosome chromatin. Monomethylation at Lys-57 (H3K56me1) by EHMT2/G9A in G1 phase promotes interaction with PCNA and is required for DNA replication. Phosphorylated at Thr-4 (H3T3ph) by HASPIN during prophase and dephosphorylated during anaphase. Phosphorylation at Ser-11 (H3S10ph) by AURKB is crucial for chromosome condensation and cell-cycle progression during mitosis and meiosis. In addition phosphorylation at Ser-11 (H3S10ph) by RPS6KA4 and RPS6KA5 is important during interphase because it enables the transcription of genes following external stimulation, like mitogens, stress, growth factors or UV irradiation and result in the activation of genes, such as c-fos and c-jun. Phosphorylation at Ser-11 (H3S10ph), which is linked to gene activation, prevents methylation at Lys-10 (H3K9me) but facilitates acetylation of H3 and H4. Phosphorylation at Ser-11 (H3S10ph) by AURKB mediates the dissociation of HP1 proteins (CBX1, CBX3 and CBX5) from heterochromatin. Phosphorylation at Ser-11 (H3S10ph) is also an essential regulatory mechanism for neoplastic cell transformation. Phosphorylated at Ser-29 (H3S28ph) by MAP3K20 isoform 1, RPS6KA5 or AURKB during mitosis or upon ultraviolet B irradiation. Phosphorylation at Thr-7 (H3T6ph) by PRKCB is a specific tag for epigenetic transcriptional activation that prevents demethylation of Lys-5 (H3K4me) by LSD1/KDM1A. At centromeres, specifically phosphorylated at Thr-12 (H3T11ph) from prophase to early anaphase, by DAPK3 and PKN1. Phosphorylation at Thr-12 (H3T11ph) by PKN1 or isoform M2 of PKM (PKM2) is a specific tag for epigenetic transcriptional activation that promotes demethylation of Lys-10 (H3K9me) by KDM4C/JMJD2C. Phosphorylation at Tyr-42 (H3Y41ph) by JAK2 promotes exclusion of CBX5 (HP1 alpha) from chromatin. Post-translationally, ubiquitinated. In terms of processing, lysine deamination at Lys-5 (H3K4all) to form allysine is mediated by LOXL2. Allysine formation by LOXL2 only takes place on H3K4me3 and results in gene repression. Butyrylation of histones marks active promoters and competes with histone acetylation. It is present during late spermatogenesis. Post-translationally, succinylation at Lys-80 (H3K79succ) by KAT2A takes place with a maximum frequency around the transcription start sites of genes. It gives a specific tag for epigenetic transcription activation. Desuccinylation at Lys-123 (H3K122succ) by SIRT7 in response to DNA damage promotes chromatin condensation and double-strand breaks (DSBs) repair. In terms of processing, serine ADP-ribosylation constitutes the primary form of ADP-ribosylation of proteins in response to DNA damage. Serine ADP-ribosylation at Ser-11 (H3S10ADPr) is mutually exclusive with phosphorylation at Ser-11 (H3S10ph) and impairs acetylation at Lys-10 (H3K9ac).

Its subcellular location is the nucleus. It is found in the chromosome. Functionally, core component of nucleosome. Nucleosomes wrap and compact DNA into chromatin, limiting DNA accessibility to the cellular machineries which require DNA as a template. Histones thereby play a central role in transcription regulation, DNA repair, DNA replication and chromosomal stability. DNA accessibility is regulated via a complex set of post-translational modifications of histones, also called histone code, and nucleosome remodeling. This Homo sapiens (Human) protein is Histone H3-7.